The chain runs to 133 residues: Cytochrome c-554 (133 aa).

Gln1 carries the post-translational modification Pyrrolidone carboxylic acid. Heme c contacts are provided by Met17, Cys122, Cys125, and His126.

Post-translationally, binds 1 heme c group covalently per subunit.

Its subcellular location is the periplasm. Monoheme c-type cytochrome, that is particularly expressed when cells generate energy via aerobic respiration. In Cereibacter sphaeroides (Rhodobacter sphaeroides), this protein is Cytochrome c-554 (cycF).